Reading from the N-terminus, the 93-residue chain is Protein F-93 (93 aa).

In terms of assembly, homodimer.

Functionally, probable transcription factor that recognizes a (pseudo-)palindromic DNA target sequence. This is Protein F-93 from Saccharolobus solfataricus (Sulfolobus solfataricus).